The primary structure comprises 1465 residues: DNA polymerase III PolC-type (1465 aa).

The Exonuclease domain maps to 427–583 (YVVFDVETTG…YDAEATGRLL (157 aa)).

The protein belongs to the DNA polymerase type-C family. PolC subfamily.

It localises to the cytoplasm. The catalysed reaction is DNA(n) + a 2'-deoxyribonucleoside 5'-triphosphate = DNA(n+1) + diphosphate. In terms of biological role, required for replicative DNA synthesis. This DNA polymerase also exhibits 3' to 5' exonuclease activity. The chain is DNA polymerase III PolC-type from Streptococcus pyogenes serotype M1.